A 697-amino-acid chain; its full sequence is Beta-galactosidase 17 (697 aa).

Residues 1–35 (MAMTSWPSTGRQRRHQLASMLLLVLVVVGIYVPVF) form the signal peptide. Glutamate 218 (proton donor) is an active-site residue. Residue glutamate 301 is the Nucleophile of the active site. 5 N-linked (GlcNAc...) asparagine glycosylation sites follow: asparagine 333, asparagine 519, asparagine 573, asparagine 583, and asparagine 690.

It belongs to the glycosyl hydrolase 35 family. In terms of tissue distribution, ubiquitous, with higher expression levels in roots and siliques.

It is found in the secreted. Its subcellular location is the extracellular space. It localises to the apoplast. The catalysed reaction is Hydrolysis of terminal non-reducing beta-D-galactose residues in beta-D-galactosides.. The protein is Beta-galactosidase 17 (BGAL17) of Arabidopsis thaliana (Mouse-ear cress).